Here is a 236-residue protein sequence, read N- to C-terminus: SPbeta prophage-derived uncharacterized protein YomV (236 aa).

In Bacillus subtilis (strain 168), this protein is SPbeta prophage-derived uncharacterized protein YomV (yomV).